We begin with the raw amino-acid sequence, 614 residues long: 1-deoxy-D-xylulose-5-phosphate synthase (614 aa).

Thiamine diphosphate-binding positions include His76 and 117–119 (GHS). Asp148 provides a ligand contact to Mg(2+). Residues 149-150 (GA), Asn177, Tyr285, and Glu366 each bind thiamine diphosphate. Asn177 contributes to the Mg(2+) binding site.

Belongs to the transketolase family. DXPS subfamily. Homodimer. Mg(2+) is required as a cofactor. Requires thiamine diphosphate as cofactor.

It carries out the reaction D-glyceraldehyde 3-phosphate + pyruvate + H(+) = 1-deoxy-D-xylulose 5-phosphate + CO2. It participates in metabolic intermediate biosynthesis; 1-deoxy-D-xylulose 5-phosphate biosynthesis; 1-deoxy-D-xylulose 5-phosphate from D-glyceraldehyde 3-phosphate and pyruvate: step 1/1. In terms of biological role, catalyzes the acyloin condensation reaction between C atoms 2 and 3 of pyruvate and glyceraldehyde 3-phosphate to yield 1-deoxy-D-xylulose-5-phosphate (DXP). This is 1-deoxy-D-xylulose-5-phosphate synthase from Pasteurella multocida (strain Pm70).